The primary structure comprises 172 residues: CD-NTase-associated protein 7 (172 aa).

The interval 141 to 172 (AQSPGINGYLENDKTYSAGGRSLTRTSVRNFV) is required for binding to CdnC and to confer phage immunity.

It belongs to the bacterial HORMA family. HORMA1 subfamily. As to quaternary structure, forms complexes with CdnC with 1:1 and 2:2 stoichimetry, and a 1:1:6 CdnC:Cap7:Cap6 complex.

Functionally, sensor protein of a CBASS antivirus system. CBASS (cyclic oligonucleotide-based antiphage signaling system) provides immunity against bacteriophage. The CD-NTase protein synthesizes cyclic nucleotides in response to infection; these serve as specific second messenger signals. The signals activate a diverse range of effectors, leading to bacterial cell death and thus abortive phage infection. A type III-C(AAA) CBASS system. In terms of biological role, binds to a closure peptide (consensus His-Xaa-Xaa-Ile-Leu-Leu-Thr), which allows it to activate CdnC for second messenger synthesis. Protects E.coli strain JP313 against bacteriophage lambda cI- infection. When the cdnC-cap7-cap6-nucC operon is transformed into a susceptible strain it confers bacteriophage immunity. Mutations in the sensor (Cap7 also called HORMA) or effector proteins (CdnC, NucC) but not the disassembly protein (Cap6 also called Trip13) no longer confer immunity. The presence of the intact operon leads to culture collapse and cell death, which occurs before the phage has finished its replication cycle, thus protecting non-infected bacteria by aborting the phage infection and preventing its propagation. In Escherichia coli (strain MS 115-1), this protein is CD-NTase-associated protein 7.